A 586-amino-acid polypeptide reads, in one-letter code: Exocyst complex component EXO70A3 (586 aa).

N-linked (GlcNAc...) asparagine glycans are attached at residues Asn-65 and Asn-106. The disordered stretch occupies residues 119–149 (CLPSNLRPPSDDEGSDGKSHDPQSNGLGKTD). A helical membrane pass occupies residues 258–278 (FAEITTISFGMLLSFGYAIAI). Residues Asn-321 and Asn-487 are each glycosylated (N-linked (GlcNAc...) asparagine).

The protein belongs to the EXO70 family. In terms of assembly, subunit of the exocyst complex. In terms of tissue distribution, confined to the outer layer of the columella cells in the root tips of young seedlings.

The protein resides in the membrane. In terms of biological role, component of the exocyst complex involved in the docking of exocytic vesicles with fusion sites on the plasma membrane during regulated or polarized secretion. Involved in PIN4 exocytosis and gravitropic responses in columella cells. By monitoring PIN4 distribution in columella cells, modulates auxin repartition and subsequently regulates the root system architecture (RSA), thus being a component of the auxin-dependent root directional growth (ARD). The sequence is that of Exocyst complex component EXO70A3 from Arabidopsis thaliana (Mouse-ear cress).